The primary structure comprises 162 residues: Interleukin-15 (162 aa).

Residues M1–A29 form the signal peptide. The propeptide occupies G30–A48. 2 disulfides stabilise this stretch: C83-C133 and C90-C136. N-linked (GlcNAc...) asparagine glycosylation occurs at N108.

Belongs to the IL-15/IL-21 family.

The protein localises to the secreted. Cytokine that plays a major role in the development of inflammatory and protective immune responses to microbial invaders and parasites by modulating immune cells of both the innate and adaptive immune systems. Stimulates the proliferation of natural killer cells, T-cells and B-cells and promotes the secretion of several cytokines. In monocytes, induces the production of IL8 and monocyte chemotactic protein 1/CCL2, two chemokines that attract neutrophils and monocytes respectively to sites of infection. Unlike most cytokines, which are secreted in soluble form, IL15 is expressed in association with its high affinity IL15RA on the surface of IL15-producing cells and delivers signals to target cells that express IL2RB and IL2RG receptor subunits. Binding to its receptor triggers the phosphorylation of JAK1 and JAK3 and the recruitment and subsequent phosphorylation of signal transducer and activator of transcription-3/STAT3 and STAT5. In mast cells, induces the rapid tyrosine phosphorylation of STAT6 and thereby controls mast cell survival and release of cytokines such as IL4. This is Interleukin-15 (IL15) from Ailuropoda melanoleuca (Giant panda).